The sequence spans 171 residues: Transcription antitermination protein NusB (171 aa).

This sequence belongs to the NusB family.

Involved in transcription antitermination. Required for transcription of ribosomal RNA (rRNA) genes. Binds specifically to the boxA antiterminator sequence of the ribosomal RNA (rrn) operons. In Pelodictyon phaeoclathratiforme (strain DSM 5477 / BU-1), this protein is Transcription antitermination protein NusB.